A 158-amino-acid chain; its full sequence is Endoribonuclease YbeY (158 aa).

Positions 119, 123, and 129 each coordinate Zn(2+).

The protein belongs to the endoribonuclease YbeY family. Zn(2+) is required as a cofactor.

The protein localises to the cytoplasm. Functionally, single strand-specific metallo-endoribonuclease involved in late-stage 70S ribosome quality control and in maturation of the 3' terminus of the 16S rRNA. This is Endoribonuclease YbeY from Chlamydia felis (strain Fe/C-56) (Chlamydophila felis).